The following is a 394-amino-acid chain: GPI transamidase component GAB1 (394 aa).

The Cytoplasmic portion of the chain corresponds to 1–135 (MDSTALKVAL…TLLSCISRSS (135 aa)). Residues 136 to 156 (IIFTNFAISSSLYCILAEGNV) form a helical membrane-spanning segment. Topologically, residues 157–160 (LLSS) are lumenal. A helical transmembrane segment spans residues 161–181 (VMISISGYLSVYPILLLIPLL). Residues 182–190 (GMLKSWRQR) are Cytoplasmic-facing. Residues 191 to 211 (ILSAIVSILSLLILLLFSYSI) traverse the membrane as a helical segment. The Lumenal segment spans residues 212–224 (LGSQSWSFLTQVY). The helical transmembrane segment at 225–245 (GSIITFEKVFPNLGLWWYFFI) threads the bilayer. Positions 235 to 255 (PNLGLWWYFFIEMFDTFIPFF) are may be involved in recognition of long-chain fatty acids in GPI. Topologically, residues 246 to 250 (EMFDT) are cytoplasmic. The helical transmembrane segment at 251 to 271 (FIPFFKAVFNIFIAVFITPFT) threads the bilayer. The Lumenal segment spans residues 272–297 (LRYHKQPFYAFILCIGWIVLTKPYPS). The chain crosses the membrane as a helical span at residues 298–318 (LGDAGFFFSFLPFFTPLFGYL). The Cytoplasmic segment spans residues 319-324 (RYPIIS). Residues 325-345 (ALLFLHAIVLAPIFYHLWVVL) traverse the membrane as a helical segment. At 346–351 (GSGNSN) the chain is on the lumenal side. Residues 352 to 372 (FFYAISLVYALAIASILVDLN) traverse the membrane as a helical segment. Residues 373–394 (WAMLRIEYDNGIPNFKLKVTQI) lie on the Cytoplasmic side of the membrane.

Belongs to the PIGU family. Forms a complex with GPI16, GPI17, GPI8 and GAA1.

It localises to the endoplasmic reticulum membrane. The protein operates within glycolipid biosynthesis; glycosylphosphatidylinositol-anchor biosynthesis. Component of the GPI transamidase complex. May be involved in the recognition of either the GPI attachment signal or the lipid portion of GPI. The polypeptide is GPI transamidase component GAB1 (GAB1) (Saccharomyces cerevisiae (strain ATCC 204508 / S288c) (Baker's yeast)).